Consider the following 323-residue polypeptide: Polycomb complex protein BMI-1-B (323 aa).

The segment at 18 to 57 adopts an RING-type zinc-finger fold; it reads CVLCGGYFIDAATIIECLHSFCKTCIVRYLETSKYCPICD. The Nuclear localization signal motif lies at 81–95; that stretch reads KLVPGLFKGEMKRRR. The tract at residues 238-310 is disordered; that stretch reads PHTDRINNTS…HQNPFANRAR (73 aa). Residues 287 to 301 show a composition bias toward low complexity; the sequence is HISSTINGTNSSSSH.

In terms of assembly, component of a PRC1-like complex. Interacts with cbx4.

It is found in the nucleus. Component of a Polycomb group (PcG) multiprotein PRC1-like complex, a complex class required to maintain the transcriptionally repressive state of many genes, including Hox genes, throughout development. PcG PRC1 complex acts via chromatin remodeling and modification of histones; it mediates monoubiquitination of histone H2A 'Lys-119', rendering chromatin heritably changed in its expressibility. In the PRC1 complex, it is required to stimulate the E3 ubiquitin-protein ligase activity of rnf2. The protein is Polycomb complex protein BMI-1-B (bmi1b) of Xenopus laevis (African clawed frog).